Consider the following 547-residue polypeptide: Alpha-humulene/(-)-(E)-beta-caryophyllene synthase (547 aa).

(2E,6E)-farnesyl diphosphate contacts are provided by R262, D299, D303, R442, and D445. Mg(2+) is bound by residues D299 and D303. A DDXXD motif motif is present at residues 299–303; that stretch reads DDMYD. Residues D445, D446, S449, and E453 each coordinate Mg(2+).

This sequence belongs to the terpene synthase family. Tpsa subfamily. Monomer. The cofactor is Mg(2+). Mn(2+) serves as cofactor. As to expression, expressed exclusively in flowers. Expressed in the flower stigmata and also detected in the mesocarp cell layers of the silique wall.

The protein localises to the cytoplasm. It catalyses the reaction (2E,6E)-farnesyl diphosphate = (-)-(E)-beta-caryophyllene + diphosphate. The enzyme catalyses (2E,6E)-farnesyl diphosphate = alpha-copaene + diphosphate. It carries out the reaction (2E,6E)-farnesyl diphosphate = alpha-humulene + diphosphate. The catalysed reaction is (2E,6E)-farnesyl diphosphate = (1S,2S,4R)-beta-elemene + diphosphate. Its pathway is secondary metabolite biosynthesis; terpenoid biosynthesis. Involved in sesquiterpene (C15) biosynthesis. The major products are beta-caryophyllene and alpha-humulene. Does not convert geranyl diphosphate (GPP) to any monoterpenes. The polypeptide is Alpha-humulene/(-)-(E)-beta-caryophyllene synthase (Arabidopsis thaliana (Mouse-ear cress)).